Reading from the N-terminus, the 709-residue chain is Phosphoribosylformylglycinamidine synthase subunit PurL (709 aa).

The active site involves His-36. The ATP site is built by Tyr-39 and Lys-80. A Mg(2+)-binding site is contributed by Glu-82. Substrate-binding positions include 83–86 (SHNH) and Arg-105. Catalysis depends on His-84, which acts as the Proton acceptor. Asp-106 serves as a coordination point for Mg(2+). Gln-226 is a substrate binding site. Asp-252 contributes to the Mg(2+) binding site. Substrate is bound at residue 294 to 296 (ETQ). ATP contacts are provided by Asp-470 and Gly-507. Ser-510 lines the substrate pocket.

It belongs to the FGAMS family. As to quaternary structure, monomer. Part of the FGAM synthase complex composed of 1 PurL, 1 PurQ and 2 PurS subunits.

The protein localises to the cytoplasm. The enzyme catalyses N(2)-formyl-N(1)-(5-phospho-beta-D-ribosyl)glycinamide + L-glutamine + ATP + H2O = 2-formamido-N(1)-(5-O-phospho-beta-D-ribosyl)acetamidine + L-glutamate + ADP + phosphate + H(+). Its pathway is purine metabolism; IMP biosynthesis via de novo pathway; 5-amino-1-(5-phospho-D-ribosyl)imidazole from N(2)-formyl-N(1)-(5-phospho-D-ribosyl)glycinamide: step 1/2. Its function is as follows. Part of the phosphoribosylformylglycinamidine synthase complex involved in the purines biosynthetic pathway. Catalyzes the ATP-dependent conversion of formylglycinamide ribonucleotide (FGAR) and glutamine to yield formylglycinamidine ribonucleotide (FGAM) and glutamate. The FGAM synthase complex is composed of three subunits. PurQ produces an ammonia molecule by converting glutamine to glutamate. PurL transfers the ammonia molecule to FGAR to form FGAM in an ATP-dependent manner. PurS interacts with PurQ and PurL and is thought to assist in the transfer of the ammonia molecule from PurQ to PurL. The polypeptide is Phosphoribosylformylglycinamidine synthase subunit PurL (Saccharolobus islandicus (strain M.16.27) (Sulfolobus islandicus)).